The following is a 441-amino-acid chain: tRNA modification GTPase MnmE (441 aa).

Residues R21, E78, and K117 each contribute to the (6S)-5-formyl-5,6,7,8-tetrahydrofolate site. Positions 211 to 363 (GIVMTIVGKP…LENKIVSKVK (153 aa)) constitute a TrmE-type G domain. Residue N221 coordinates K(+). GTP-binding positions include 221–226 (NSGKST), 240–246 (TDIPGTT), and 265–268 (DTAG). Residue S225 coordinates Mg(2+). Residues T240, I242, and T245 each contribute to the K(+) site. A Mg(2+)-binding site is contributed by T246. Residue K441 coordinates (6S)-5-formyl-5,6,7,8-tetrahydrofolate.

It belongs to the TRAFAC class TrmE-Era-EngA-EngB-Septin-like GTPase superfamily. TrmE GTPase family. As to quaternary structure, homodimer. Heterotetramer of two MnmE and two MnmG subunits. K(+) is required as a cofactor.

The protein resides in the cytoplasm. Functionally, exhibits a very high intrinsic GTPase hydrolysis rate. Involved in the addition of a carboxymethylaminomethyl (cmnm) group at the wobble position (U34) of certain tRNAs, forming tRNA-cmnm(5)s(2)U34. The polypeptide is tRNA modification GTPase MnmE (Thermosipho melanesiensis (strain DSM 12029 / CIP 104789 / BI429)).